The sequence spans 447 residues: tRNA modification GTPase MnmE (447 aa).

(6S)-5-formyl-5,6,7,8-tetrahydrofolate is bound by residues Arg-24, Glu-81, and Lys-120. A TrmE-type G domain is found at 216-371 (GLNVVIAGKP…LRKELSDIAG (156 aa)). A K(+)-binding site is contributed by Asn-226. GTP is bound by residues 226–231 (NAGKSS), 245–251 (TDIAGTT), and 270–273 (DTAG). Ser-230 is a Mg(2+) binding site. The K(+) site is built by Thr-245, Ile-247, and Thr-250. Residue Thr-251 coordinates Mg(2+). Lys-447 contacts (6S)-5-formyl-5,6,7,8-tetrahydrofolate.

This sequence belongs to the TRAFAC class TrmE-Era-EngA-EngB-Septin-like GTPase superfamily. TrmE GTPase family. In terms of assembly, homodimer. Heterotetramer of two MnmE and two MnmG subunits. K(+) serves as cofactor.

Its subcellular location is the cytoplasm. Its function is as follows. Exhibits a very high intrinsic GTPase hydrolysis rate. Involved in the addition of a carboxymethylaminomethyl (cmnm) group at the wobble position (U34) of certain tRNAs, forming tRNA-cmnm(5)s(2)U34. This is tRNA modification GTPase MnmE from Ruthia magnifica subsp. Calyptogena magnifica.